Consider the following 456-residue polypeptide: tRNA modification GTPase MnmE (456 aa).

Residues Arg24, Glu81, and Lys120 each coordinate (6S)-5-formyl-5,6,7,8-tetrahydrofolate. Positions 216–379 constitute a TrmE-type G domain; sequence GMTVVIAGRP…LREHLKACMG (164 aa). Asn226 is a K(+) binding site. GTP-binding positions include 226-231, 245-251, 270-273, 335-338, and 359-361; these read NAGKSS, TEIAGTT, DTAG, NKAD, and SAR. Ser230 is a binding site for Mg(2+). The K(+) site is built by Thr245, Ile247, and Thr250. Thr251 lines the Mg(2+) pocket. Lys456 lines the (6S)-5-formyl-5,6,7,8-tetrahydrofolate pocket.

This sequence belongs to the TRAFAC class TrmE-Era-EngA-EngB-Septin-like GTPase superfamily. TrmE GTPase family. Homodimer. Heterotetramer of two MnmE and two MnmG subunits. Requires K(+) as cofactor.

The protein resides in the cytoplasm. Its function is as follows. Exhibits a very high intrinsic GTPase hydrolysis rate. Involved in the addition of a carboxymethylaminomethyl (cmnm) group at the wobble position (U34) of certain tRNAs, forming tRNA-cmnm(5)s(2)U34. The sequence is that of tRNA modification GTPase MnmE from Pseudomonas syringae pv. tomato (strain ATCC BAA-871 / DC3000).